The primary structure comprises 193 residues: Ancillary SecYEG translocon subunit (193 aa).

At Met1 to Asn8 the chain is on the cytoplasmic side. Residues Ile9 to Phe29 form a helical membrane-spanning segment. Residues Ser30–Asn193 lie on the Periplasmic side of the membrane.

It belongs to the YfgM family. Interacts with the SecYEG translocon. Forms a complex with PpiD.

The protein localises to the cell inner membrane. In terms of biological role, may mediate protein transfer from the SecYEG translocon to the periplasmic chaperone network via its periplasmic C-terminal region. In Buchnera aphidicola subsp. Acyrthosiphon pisum (strain APS) (Acyrthosiphon pisum symbiotic bacterium), this protein is Ancillary SecYEG translocon subunit.